An 839-amino-acid polypeptide reads, in one-letter code: Elongation factor 2 (839 aa).

The tr-type G domain occupies 17-248 (ENIRNMSVIA…MGRLWGDSYF (232 aa)). GTP contacts are provided by residues 26–33 (AHVDHGKT), 156–159 (NKVD), and 211–213 (SGL). Residue His698 is modified to Diphthamide.

Belongs to the TRAFAC class translation factor GTPase superfamily. Classic translation factor GTPase family. EF-G/EF-2 subfamily. In terms of processing, phosphorylation by EF-2 kinase completely inactivates EF-2.

It localises to the cytoplasm. It catalyses the reaction GTP + H2O = GDP + phosphate + H(+). Catalyzes the GTP-dependent ribosomal translocation step during translation elongation. During this step, the ribosome changes from the pre-translocational (PRE) to the post-translocational (POST) state as the newly formed A-site-bound peptidyl-tRNA and P-site-bound deacylated tRNA move to the P and E sites, respectively. Catalyzes the coordinated movement of the two tRNA molecules, the mRNA and conformational changes in the ribosome. This is Elongation factor 2 (efbA) from Dictyostelium discoideum (Social amoeba).